A 348-amino-acid chain; its full sequence is Dihydroorotase (348 aa).

Histidine 17 and histidine 19 together coordinate Zn(2+). Residues 19-21 (HLR) and asparagine 45 contribute to the substrate site. The Zn(2+) site is built by lysine 103, histidine 140, and histidine 178. The residue at position 103 (lysine 103) is an N6-carboxylysine. Histidine 140 provides a ligand contact to substrate. Leucine 223 provides a ligand contact to substrate. Aspartate 251 contributes to the Zn(2+) binding site. Residue aspartate 251 is part of the active site. The substrate site is built by histidine 255 and alanine 267.

This sequence belongs to the metallo-dependent hydrolases superfamily. DHOase family. Class II DHOase subfamily. In terms of assembly, homodimer. Requires Zn(2+) as cofactor.

The enzyme catalyses (S)-dihydroorotate + H2O = N-carbamoyl-L-aspartate + H(+). The protein operates within pyrimidine metabolism; UMP biosynthesis via de novo pathway; (S)-dihydroorotate from bicarbonate: step 3/3. Its function is as follows. Catalyzes the reversible cyclization of carbamoyl aspartate to dihydroorotate. The sequence is that of Dihydroorotase from Escherichia coli (strain UTI89 / UPEC).